Reading from the N-terminus, the 384-residue chain is Spermatogenesis-associated protein 32 (384 aa).

The disordered stretch occupies residues arginine 23–proline 60. A phosphoserine mark is found at serine 167 and serine 170. Disordered stretches follow at residues aspartate 211–leucine 232, valine 284–tryptophan 310, and leucine 340–asparagine 366. The span at serine 214–aspartate 231 shows a compositional bias: low complexity. The segment covering serine 353–asparagine 366 has biased composition (basic and acidic residues).

In terms of assembly, interacts with syntaxin-1 and ACTB. Detected in testis, and on the acrosomal cap of spermatids.

This chain is Spermatogenesis-associated protein 32 (SPATA32), found in Homo sapiens (Human).